The primary structure comprises 294 residues: Acetyl-coenzyme A carboxylase carboxyl transferase subunit beta (294 aa).

Positions 30–294 (IMTKCPECKK…PEVGGEADGE (265 aa)) constitute a CoA carboxyltransferase N-terminal domain. Zn(2+) is bound by residues C34, C37, C53, and C56. The C4-type zinc finger occupies 34–56 (CPECKKIMYTKELQKNLMVCNYC).

This sequence belongs to the AccD/PCCB family. In terms of assembly, acetyl-CoA carboxylase is a heterohexamer composed of biotin carboxyl carrier protein (AccB), biotin carboxylase (AccC) and two subunits each of ACCase subunit alpha (AccA) and ACCase subunit beta (AccD). Requires Zn(2+) as cofactor.

The protein localises to the cytoplasm. It catalyses the reaction N(6)-carboxybiotinyl-L-lysyl-[protein] + acetyl-CoA = N(6)-biotinyl-L-lysyl-[protein] + malonyl-CoA. It participates in lipid metabolism; malonyl-CoA biosynthesis; malonyl-CoA from acetyl-CoA: step 1/1. Functionally, component of the acetyl coenzyme A carboxylase (ACC) complex. Biotin carboxylase (BC) catalyzes the carboxylation of biotin on its carrier protein (BCCP) and then the CO(2) group is transferred by the transcarboxylase to acetyl-CoA to form malonyl-CoA. In Listeria monocytogenes serotype 4a (strain HCC23), this protein is Acetyl-coenzyme A carboxylase carboxyl transferase subunit beta.